We begin with the raw amino-acid sequence, 363 residues long: Outer membrane protein P2 (363 aa).

The first 20 residues, methionine 1 to alanine 20, serve as a signal peptide directing secretion.

The protein belongs to the Gram-negative porin family. Homotrimer.

The protein localises to the cell outer membrane. Forms pores that allow passive diffusion of small molecules across the outer membrane. The protein is Outer membrane protein P2 (ompP2) of Haemophilus influenzae.